The following is a 372-amino-acid chain: Chorismate synthase (372 aa).

Residues R48 and R54 each contribute to the NADP(+) site. FMN contacts are provided by residues 125–127 (RSS), 238–239 (NA), G278, 293–297 (KPTSS), and R319.

This sequence belongs to the chorismate synthase family. As to quaternary structure, homotetramer. FMNH2 is required as a cofactor.

It catalyses the reaction 5-O-(1-carboxyvinyl)-3-phosphoshikimate = chorismate + phosphate. Its pathway is metabolic intermediate biosynthesis; chorismate biosynthesis; chorismate from D-erythrose 4-phosphate and phosphoenolpyruvate: step 7/7. Catalyzes the anti-1,4-elimination of the C-3 phosphate and the C-6 proR hydrogen from 5-enolpyruvylshikimate-3-phosphate (EPSP) to yield chorismate, which is the branch point compound that serves as the starting substrate for the three terminal pathways of aromatic amino acid biosynthesis. This reaction introduces a second double bond into the aromatic ring system. The protein is Chorismate synthase of Xylella fastidiosa (strain 9a5c).